The sequence spans 297 residues: Homoserine kinase (297 aa).

Residue 82 to 92 participates in ATP binding; it reads PLTRGLGSSAS.

It belongs to the GHMP kinase family. Homoserine kinase subfamily.

It is found in the cytoplasm. The catalysed reaction is L-homoserine + ATP = O-phospho-L-homoserine + ADP + H(+). The protein operates within amino-acid biosynthesis; L-threonine biosynthesis; L-threonine from L-aspartate: step 4/5. Catalyzes the ATP-dependent phosphorylation of L-homoserine to L-homoserine phosphate. This is Homoserine kinase from Bacillus thuringiensis (strain Al Hakam).